Here is a 215-residue protein sequence, read N- to C-terminus: Ribonuclease T (215 aa).

Residues 21–195 (VVIDVETAGF…YDSKKTAELF (175 aa)) enclose the Exonuclease domain. Mg(2+) is bound by residues D24, E26, H182, and D187. Catalysis depends on H182, which acts as the Proton donor/acceptor.

This sequence belongs to the RNase T family. In terms of assembly, homodimer. It depends on Mg(2+) as a cofactor.

Trims short 3' overhangs of a variety of RNA species, leaving a one or two nucleotide 3' overhang. Responsible for the end-turnover of tRNA: specifically removes the terminal AMP residue from uncharged tRNA (tRNA-C-C-A). Also appears to be involved in tRNA biosynthesis. This chain is Ribonuclease T, found in Wigglesworthia glossinidia brevipalpis.